Here is a 483-residue protein sequence, read N- to C-terminus: Probable apyrase 3 (483 aa).

Topologically, residues 1–29 (MTPETDALKVQILPKHQSLPYTVTKAKSK) are cytoplasmic. Residues 30–50 (SLILLVVVSVTITLGLLLYVF) form a helical; Signal-anchor for type II membrane protein membrane-spanning segment. The Extracellular segment spans residues 51 to 483 (NSNSVISSGS…NGKSRKYLGF (433 aa)). Residue 72–82 (VLIDAGSSGTR) coordinates ATP. E195 (proton acceptor) is an active-site residue. 219 to 229 (GIVELGGASAQ) serves as a coordination point for ATP. N-linked (GlcNAc...) asparagine glycosylation is found at N250, N281, N305, and N326.

Belongs to the GDA1/CD39 NTPase family. Requires Ca(2+) as cofactor. As to expression, expressed in the initiation zone of lateral root and in the lateral root tip, the adaxial junction of lateral shoots with the stems, and in the abscission zone of flower organs. Not expressed in the rosette leaves.

The protein resides in the membrane. The catalysed reaction is a ribonucleoside 5'-triphosphate + 2 H2O = a ribonucleoside 5'-phosphate + 2 phosphate + 2 H(+). In terms of biological role, catalyzes the hydrolysis of phosphoanhydride bonds of nucleoside tri- and di-phosphates. This chain is Probable apyrase 3 (APY3), found in Arabidopsis thaliana (Mouse-ear cress).